A 343-amino-acid chain; its full sequence is Holliday junction branch migration complex subunit RuvB (343 aa).

The tract at residues 4–193 (TDNLTAAQPQ…FGIVSRLEFY (190 aa)) is large ATPase domain (RuvB-L). Residues Leu32, Arg33, Gly74, Lys77, Thr78, Thr79, 140–142 (EDY), Arg183, Tyr193, and Arg230 contribute to the ATP site. Position 78 (Thr78) interacts with Mg(2+). The interval 194 to 264 (ENRDLTTIVS…IADAALSMLD (71 aa)) is small ATPAse domain (RuvB-S). The segment at 267 to 343 (AQGLDVMDRK…YLHFGLPVEK (77 aa)) is head domain (RuvB-H). Residues Arg322 and Arg327 each coordinate DNA.

This sequence belongs to the RuvB family. Homohexamer. Forms an RuvA(8)-RuvB(12)-Holliday junction (HJ) complex. HJ DNA is sandwiched between 2 RuvA tetramers; dsDNA enters through RuvA and exits via RuvB. An RuvB hexamer assembles on each DNA strand where it exits the tetramer. Each RuvB hexamer is contacted by two RuvA subunits (via domain III) on 2 adjacent RuvB subunits; this complex drives branch migration. In the full resolvosome a probable DNA-RuvA(4)-RuvB(12)-RuvC(2) complex forms which resolves the HJ.

The protein localises to the cytoplasm. It carries out the reaction ATP + H2O = ADP + phosphate + H(+). Its function is as follows. The RuvA-RuvB-RuvC complex processes Holliday junction (HJ) DNA during genetic recombination and DNA repair, while the RuvA-RuvB complex plays an important role in the rescue of blocked DNA replication forks via replication fork reversal (RFR). RuvA specifically binds to HJ cruciform DNA, conferring on it an open structure. The RuvB hexamer acts as an ATP-dependent pump, pulling dsDNA into and through the RuvAB complex. RuvB forms 2 homohexamers on either side of HJ DNA bound by 1 or 2 RuvA tetramers; 4 subunits per hexamer contact DNA at a time. Coordinated motions by a converter formed by DNA-disengaged RuvB subunits stimulates ATP hydrolysis and nucleotide exchange. Immobilization of the converter enables RuvB to convert the ATP-contained energy into a lever motion, pulling 2 nucleotides of DNA out of the RuvA tetramer per ATP hydrolyzed, thus driving DNA branch migration. The RuvB motors rotate together with the DNA substrate, which together with the progressing nucleotide cycle form the mechanistic basis for DNA recombination by continuous HJ branch migration. Branch migration allows RuvC to scan DNA until it finds its consensus sequence, where it cleaves and resolves cruciform DNA. The chain is Holliday junction branch migration complex subunit RuvB from Neisseria meningitidis serogroup C (strain 053442).